The following is a 157-amino-acid chain: UPF0756 membrane protein ABC2716 (157 aa).

A run of 4 helical transmembrane segments spans residues 8–28, 54–74, 84–104, and 117–137; these read FLLLLMAIALIAKNQSLIIAI, LGVTIITIAVLVPIATGDIGF, LYAWVALGSGIAVALVAASGI, and LVLGTIVAVSFLNGVAVGPLI.

Belongs to the UPF0756 family.

The protein localises to the cell membrane. In Shouchella clausii (strain KSM-K16) (Alkalihalobacillus clausii), this protein is UPF0756 membrane protein ABC2716.